Consider the following 395-residue polypeptide: Putative nickel insertion protein (395 aa).

Belongs to the LarC family.

This is Putative nickel insertion protein from Archaeoglobus fulgidus (strain ATCC 49558 / DSM 4304 / JCM 9628 / NBRC 100126 / VC-16).